The chain runs to 1336 residues: Immunoglobulin superfamily member 1 (1336 aa).

Positions 1–28 are cleaved as a signal peptide; the sequence is MTLDRPGEGATMLKTFTVLLFCIRMSLG. Over 29-518 the chain is Extracellular; the sequence is MTSIVMDPQP…GYLTWNYVLN (490 aa). Ig-like C2-type domains lie at 38–122, 137–222, 226–312, 321–408, and 419–500; these read PELW…KVLE, QAET…LVVA, PKPT…SDVL, PKTW…PSHN, and PKPS…HRSE. Residue Asn-53 is glycosylated (N-linked (GlcNAc...) asparagine). A disulfide bridge connects residues Cys-58 and Cys-106. Cys-248 and Cys-296 are oxidised to a cystine. Residues Asn-338, Asn-374, and Asn-381 are each glycosylated (N-linked (GlcNAc...) asparagine). Cystine bridges form between Cys-343-Cys-392 and Cys-441-Cys-484. A helical transmembrane segment spans residues 519-539; sequence EAIRLSLIMQLVALLLVVLWI. Over 540–559 the chain is Cytoplasmic; it reads RWKCRRLRIREAWLLGTAQG. A helical membrane pass occupies residues 560-580; the sequence is VTMLFIVTALLCCGLCNGVLI. The Extracellular segment spans residues 581 to 1336; it reads EETEIVMPTP…RISVELPVPI (756 aa). 7 consecutive Ig-like C2-type domains span residues 589–677, 686–760, 777–869, 873–958, 965–1060, 1065–1150, and 1161–1242; these read TPKP…ALEL, PVIS…RPFK, PKPF…LVVT, PKPT…YLSM, TDTF…ELLV, PKPS…NHSD, and PKPS…EPSD. Residues Asn-607, Asn-747, Asn-798, Asn-846, Asn-939, Asn-986, Asn-1027, and Asn-1082 are each glycosylated (N-linked (GlcNAc...) asparagine). A disulfide bond links Cys-703 and Cys-750. 2 cysteine pairs are disulfide-bonded: Cys-799-Cys-849 and Cys-895-Cys-942. Cys-1087 and Cys-1134 are joined by a disulfide. Asn-1147 and Asn-1223 each carry an N-linked (GlcNAc...) asparagine glycan. The cysteines at positions 1183 and 1226 are disulfide-linked. The tract at residues 1308–1336 is disordered; that stretch reads CNQEGEPGTPANSPSSTSQRISVELPVPI. The segment covering 1317-1328 has biased composition (polar residues); that stretch reads PANSPSSTSQRI.

Interacts with INHA. In PubMed:12385827 does not interact with INHA; standard receptor binding assay. Interacts with ACVR1B; the interaction appears to be ligand-dependent as it is diminished by inhibin B and activin A. Interacts with ACVR2A, ACVR2B, ACVRL1 and BMPR1B. Interacts with HECTD1. As to expression, highly expressed in pancreas, testis and fetal liver. Moderately expressed in heart, prostate and small intestine. Expressed at very low levels in brain, thymus, ovary, colon, fetal lung and fetal kidney. Expressed in muscle. Isoform 3 is expressed in pituitary gland.

Its subcellular location is the membrane. The protein resides in the secreted. Seems to be a coreceptor in inhibin signaling, but seems not to be a high-affinity inhibin receptor. Antagonizes activin A signaling in the presence or absence of inhibin B. Necessary to mediate a specific antagonistic effect of inhibin B on activin-stimulated transcription. In Homo sapiens (Human), this protein is Immunoglobulin superfamily member 1 (IGSF1).